The following is a 311-amino-acid chain: Methionyl-tRNA formyltransferase (311 aa).

Residue 110–113 (SLLP) coordinates (6S)-5,6,7,8-tetrahydrofolate.

This sequence belongs to the Fmt family.

It catalyses the reaction L-methionyl-tRNA(fMet) + (6R)-10-formyltetrahydrofolate = N-formyl-L-methionyl-tRNA(fMet) + (6S)-5,6,7,8-tetrahydrofolate + H(+). In terms of biological role, attaches a formyl group to the free amino group of methionyl-tRNA(fMet). The formyl group appears to play a dual role in the initiator identity of N-formylmethionyl-tRNA by promoting its recognition by IF2 and preventing the misappropriation of this tRNA by the elongation apparatus. The polypeptide is Methionyl-tRNA formyltransferase (Streptococcus pneumoniae (strain JJA)).